We begin with the raw amino-acid sequence, 117 residues long: Ribosome-binding factor A (117 aa).

It belongs to the RbfA family. As to quaternary structure, monomer. Binds 30S ribosomal subunits, but not 50S ribosomal subunits or 70S ribosomes.

The protein resides in the cytoplasm. One of several proteins that assist in the late maturation steps of the functional core of the 30S ribosomal subunit. Associates with free 30S ribosomal subunits (but not with 30S subunits that are part of 70S ribosomes or polysomes). Required for efficient processing of 16S rRNA. May interact with the 5'-terminal helix region of 16S rRNA. The protein is Ribosome-binding factor A of Leptospira borgpetersenii serovar Hardjo-bovis (strain JB197).